The chain runs to 565 residues: NAD-dependent malic enzyme (565 aa).

Tyr104 functions as the Proton donor in the catalytic mechanism. An NAD(+)-binding site is contributed by Arg157. Lys175 serves as the catalytic Proton acceptor. 3 residues coordinate a divalent metal cation: Glu246, Asp247, and Asp270. The NAD(+) site is built by Asp270 and Asn418.

This sequence belongs to the malic enzymes family. Homotetramer. Requires Mg(2+) as cofactor. The cofactor is Mn(2+).

It catalyses the reaction (S)-malate + NAD(+) = pyruvate + CO2 + NADH. The enzyme catalyses oxaloacetate + H(+) = pyruvate + CO2. The polypeptide is NAD-dependent malic enzyme (Escherichia coli O6:H1 (strain CFT073 / ATCC 700928 / UPEC)).